Here is a 192-residue protein sequence, read N- to C-terminus: Putative metal-sulfur cluster biosynthesis proteins YuaD (192 aa).

The 165-residue stretch at 15–179 (ADTKSFVTKQ…VYTGDEIEVH (165 aa)) folds into the MOSC domain.

This Bacillus subtilis (strain 168) protein is Putative metal-sulfur cluster biosynthesis proteins YuaD (yuaD).